We begin with the raw amino-acid sequence, 501 residues long: Aldehyde dehydrogenase mpl4 (501 aa).

NAD(+) is bound at residue 231-236 (GSTASG). Catalysis depends on residues Glu-253 and Cys-287.

The protein belongs to the aldehyde dehydrogenase family.

It carries out the reaction an aldehyde + NAD(+) + H2O = a carboxylate + NADH + 2 H(+). It participates in mycotoxin biosynthesis. Aldehyde dehydrogenase; part of the gene cluster that mediates the biosynthesis of the mycotoxin citrinin, a hepato-nephrotoxic compound to humans due to inhibition of respiration complex III. The pathway begins with the synthesis of a keto-aldehyde intermediate by the citrinin PKS (pksCT) from successive condensations of 4 malonyl-CoA units, presumably with a simple acetyl-CoA starter unit. Release of the keto-aldehyde intermediate is consistent with the presence of the C-terminal reductive release domain. Mp11 collaborates with pksCT by catalyzing the hydrolysis of ACP-bound acyl intermediates to free the ACP from stalled intermediates. Mpl2 then catalyzes the oxidation of the C-12 methyl of the ketone intermediate to an alcohol intermediate which is further oxidized by the oxidoreductase mpl7 to produce a bisaldehyde intermediate. The fourth catalytic step is catalyzed by the mpl4 aldehyde dehydrogenase. The final transformation is the reduction of C-3 by mpl6 to provide the chemically stable citrinin nucleus. In Monascus purpureus (Red mold), this protein is Aldehyde dehydrogenase mpl4.